The primary structure comprises 357 residues: Probable cinnamyl alcohol dehydrogenase 2 (357 aa).

C47 is a Zn(2+) binding site. S49 serves as a coordination point for NADP(+). Positions 69, 70, 100, 103, 106, 114, and 163 each coordinate Zn(2+). NADP(+)-binding positions include T167, 188 to 193, 211 to 216, T251, G275, and 298 to 300; these read GLGGVG, SSSNKK, and SFI.

This sequence belongs to the zinc-containing alcohol dehydrogenase family. Homodimer. The cofactor is Zn(2+). The N-terminus is blocked.

The catalysed reaction is (E)-cinnamyl alcohol + NADP(+) = (E)-cinnamaldehyde + NADPH + H(+). It carries out the reaction (E)-coniferol + NADP(+) = (E)-coniferaldehyde + NADPH + H(+). It catalyses the reaction (E)-sinapyl alcohol + NADP(+) = (E)-sinapaldehyde + NADPH + H(+). The enzyme catalyses (E)-4-coumaroyl alcohol + NADP(+) = (E)-4-coumaraldehyde + NADPH + H(+). The catalysed reaction is (E)-caffeyl alcohol + NADP(+) = (E)-caffeyl aldehyde + NADPH + H(+). It functions in the pathway aromatic compound metabolism; phenylpropanoid biosynthesis. Functionally, involved in lignin biosynthesis. Catalyzes the final step specific for the production of lignin monomers. Catalyzes the NADPH-dependent reduction of coniferaldehyde, 5-hydroxyconiferaldehyde, sinapaldehyde, 4-coumaraldehyde and caffeyl aldehyde to their respective alcohols. The sequence is that of Probable cinnamyl alcohol dehydrogenase 2 (CAD19) from Nicotiana tabacum (Common tobacco).